A 498-amino-acid chain; its full sequence is Glutathione hydrolase 6 (498 aa).

Over 1-49 the chain is Cytoplasmic; it reads MDATTGAVLYQKLQLWEPGMESEEEEEEEEIAEPLVLSLRRLQNTPGNK. A helical; Signal-anchor for type II membrane protein membrane pass occupies residues 50-70; that stretch reads VGGLPGAWTRLLAGLLLLAVS. Topologically, residues 71-498 are extracellular; sequence SSLALRQLQG…PSGCCPFQGY (428 aa). N-linked (GlcNAc...) asparagine glycosylation is found at Asn162, Asn167, and Asn376.

It belongs to the gamma-glutamyltransferase family. As to quaternary structure, heterodimer composed of the light and heavy chains. The active site is located in the light chain. In terms of processing, cleaved by autocatalysis into a large and a small subunit and the autocatalytic cleavage is essential to the functional activation of the enzyme.

The protein localises to the membrane. The enzyme catalyses an N-terminal (5-L-glutamyl)-[peptide] + an alpha-amino acid = 5-L-glutamyl amino acid + an N-terminal L-alpha-aminoacyl-[peptide]. The catalysed reaction is glutathione + H2O = L-cysteinylglycine + L-glutamate. It catalyses the reaction an S-substituted glutathione + H2O = an S-substituted L-cysteinylglycine + L-glutamate. Its pathway is sulfur metabolism; glutathione metabolism. Hydrolyzes and transfers gamma-glutamyl moieties from glutathione and other gamma-glutamyl compounds to acceptors. This chain is Glutathione hydrolase 6, found in Rattus norvegicus (Rat).